The following is a 146-amino-acid chain: Large ribosomal subunit protein uL16 (146 aa).

Belongs to the universal ribosomal protein uL16 family. In terms of assembly, part of the 50S ribosomal subunit.

In terms of biological role, binds 23S rRNA and is also seen to make contacts with the A and possibly P site tRNAs. This chain is Large ribosomal subunit protein uL16, found in Thermomicrobium roseum (strain ATCC 27502 / DSM 5159 / P-2).